The chain runs to 444 residues: METAIEDAGLDRGPTLTSSWDAACGALTQSLFLTRTGPRAQDLDFEQLLAPPAQGPDLVSLKSSLSPRDENPCFIYLKCGPNGGEEILSVGILSSARNMEVYLGEEYCGTSRGKNVCTVLDNSEHEKILLYKKYLKLESPTHACKIKLLSFGEEQCVLISKVVVHLRPRSAKPSPSSPALGSRIDLDNIQTIMESMGSKLSPGAQQLMDMIRFQQQNCLPIRDQLQSVLGTAGHKHLMALQSSPSSGVVDKASSTPFPFRTGLTPSAITENLKALIDKSTQPSGEGNTTNHNECHLMPQNHSLESDLKNAVSSFLPKKASGSSSVPNSELLPFLQNLCSQVNHLRVGHNARWQENVSKPREGTVGVPLEEQPVCSYLEKILSKNMEVMEKKLMKHIDERIYQLQEHIDAKMALLVDLLRSPNSPSPGMPLRHYDSRERLSNGER.

Ser-177, Ser-182, Ser-254, and Ser-302 each carry phosphoserine. A disordered region spans residues 424 to 444 (PSPGMPLRHYDSRERLSNGER). The span at 431–444 (RHYDSRERLSNGER) shows a compositional bias: basic and acidic residues.

Homodimer. Interacts with ABCB7, ABCB8/MITOSUR and ABCB10.

The protein localises to the cytoplasm. It localises to the mitochondrion. It carries out the reaction ATP + H2O = ADP + phosphate + H(+). ATPase that regulates mitochondrial ABC transporters ABCB7, ABCB8/MITOSUR and ABCB10. Regulates mitochondrial ferric concentration and heme biosynthesis and plays a role in the maintenance of mitochondrial homeostasis and cell survival. The sequence is that of ATPase PAAT from Rattus norvegicus (Rat).